The sequence spans 426 residues: Egl nine homolog 1 (426 aa).

Ala-2 is modified (N-acetylalanine). The tract at residues 6–20 (GGPGGPSPSERDRQY) is required for nuclear export. Ser-12 is subject to Phosphoserine. Zn(2+) is bound by residues Cys-21, Cys-24, Cys-33, Cys-36, Cys-42, His-46, His-54, and Cys-58. The MYND-type; atypical zinc finger occupies 21–58 (CELCGKMENLLRCSRCRSSFYCCKEHQRQDWKKHKLVC). 2 disordered regions span residues 65–129 (LGHG…PCRA) and 160–184 (ANLY…PNGQ). A compositionally biased stretch (pro residues) spans 77 to 87 (PAPPAAVPPPR). Residues 89-103 (GAREPRKAAARRDNA) show a composition bias toward basic and acidic residues. Over residues 120–129 (PAAAASPCRA) the composition is skewed to low complexity. Phosphoserine is present on Ser-125. S-nitrosocysteine is present on residues Cys-201 and Cys-208. The beta(2)beta(3) 'finger-like' loop stretch occupies residues 241-251 (VSQKSDSSKDI). The 102-residue stretch at 291–392 (KINGRTKAMV…RYAITVWYFD (102 aa)) folds into the Fe2OG dioxygenase domain. Cys-302 is subject to S-nitrosocysteine. The Fe cation site is built by His-313 and Asp-315. Cys-323 and Cys-326 each carry S-nitrosocysteine. His-374 lines the Fe cation pocket. A 2-oxoglutarate-binding site is contributed by Arg-383.

As to quaternary structure, monomer. Interacts with ING4; the interaction inhibits the hydroxylation of HIF alpha proteins. Interacts with PTGES3 (via PXLE motif); thereby recruiting EGLN1 to the HSP90 pathway to facilitate HIF alpha proteins hydroxylation. Interacts with LIMD1. Found in a complex composed of LIMD1, VHL, EGLN1/PHD2, ELOB and CUL2. Interacts with EPAS1. Interacts with CBFA2T3. Interacts with HIF1A. It depends on Fe(2+) as a cofactor. Requires L-ascorbate as cofactor. In terms of processing, S-nitrosylation inhibits the enzyme activity up to 60% under aerobic conditions. Chelation of Fe(2+) has no effect on the S-nitrosylation. It is uncertain whether nitrosylation occurs on Cys-323 or Cys-326. According to PubMed:11056053, widely expressed with highest levels in skeletal muscle and heart, moderate levels in pancreas, brain (dopaminergic neurons of adult and fetal substantia nigra) and kidney, and lower levels in lung and liver. According to PubMed:12351678 widely expressed with highest levels in brain, kidney and adrenal gland. Expressed in cardiac myocytes, aortic endothelial cells and coronary artery smooth muscle. According to PubMed:12788921; expressed in adult and fetal heart, brain, liver, lung, skeletal muscle and kidney. Also expressed in placenta. Highest levels in adult heart, brain, lung and liver and fetal brain, heart spleen and skeletal muscle.

The protein localises to the cytoplasm. It localises to the nucleus. The enzyme catalyses L-prolyl-[hypoxia-inducible factor alpha subunit] + 2-oxoglutarate + O2 = trans-4-hydroxy-L-prolyl-[hypoxia-inducible factor alpha subunit] + succinate + CO2. Its activity is regulated as follows. Following exposure to hypoxia, activated in HeLa cells but not in cardiovascular cells. In terms of biological role, cellular oxygen sensor that catalyzes, under normoxic conditions, the post-translational formation of 4-hydroxyproline in hypoxia-inducible factor (HIF) alpha proteins. Hydroxylates a specific proline found in each of the oxygen-dependent degradation (ODD) domains (N-terminal, NODD, and C-terminal, CODD) of HIF1A. Also hydroxylates HIF2A. Has a preference for the CODD site for both HIF1A and HIF1B. Hydroxylated HIFs are then targeted for proteasomal degradation via the von Hippel-Lindau ubiquitination complex. Under hypoxic conditions, the hydroxylation reaction is attenuated allowing HIFs to escape degradation resulting in their translocation to the nucleus, heterodimerization with HIF1B, and increased expression of hypoxy-inducible genes. EGLN1 is the most important isozyme under normoxia and, through regulating the stability of HIF1, involved in various hypoxia-influenced processes such as angiogenesis in retinal and cardiac functionality. Target proteins are preferentially recognized via a LXXLAP motif. The sequence is that of Egl nine homolog 1 from Homo sapiens (Human).